The chain runs to 983 residues: UPF0182 protein KRH_08700 (983 aa).

Helical transmembrane passes span 22–42 (GALL…VGFT), 67–87 (VIGL…LSLW), 116–136 (VVMV…VATQ), 172–192 (LLIG…LLMH), 213–233 (VHLG…FWLD), 261–281 (GILA…GFIG), and 288–308 (IGAA…PWAI). The tract at residues 893–959 (GAKTDTGAGV…DKAMKDGDWT (67 aa)) is disordered. Positions 947 to 959 (QDSDKAMKDGDWT) are enriched in basic and acidic residues.

The protein belongs to the UPF0182 family.

The protein localises to the cell membrane. This is UPF0182 protein KRH_08700 from Kocuria rhizophila (strain ATCC 9341 / DSM 348 / NBRC 103217 / DC2201).